Here is a 463-residue protein sequence, read N- to C-terminus: Sodium-coupled neutral amino acid transporter 7 (463 aa).

Residue S28 is modified to Phosphoserine. 11 helical membrane passes run 56–76 (AVFI…PAAF), 82–102 (VAAG…GLVI), 130–150 (LCEV…LIII), 179–199 (FTIS…KEIG), 206–226 (FLSV…YIWP), 240–260 (ASWM…QCHV), 283–303 (AAMV…FLTF), 320–340 (VAVA…YPIL), 372–392 (VLQT…IPDI), 396–416 (ISVI…LCLI), and 429–449 (ASWW…AFIF).

This sequence belongs to the amino acid/polyamine transporter 2 family. In terms of assembly, interacts with the mTORC1 complex; this interaction mediates the recruitment of mTORC1 to the lysosome and its subsequent activation. Highly expressed in the brain, including the hippocampus, especially in the granular layer of dentate gyrus cells and the pyramidal cell layer of the hippocampus, amygdala, thalamus, hypothalamus, in the layer of Purkinje cells in the cerebellum and the layers of cortex. Particularly strong expression in neurons of the ventromedial hypothalamus, basolateral amygdala, ventral tegmental area, and locus coeruleus. Not detected in glial cells, including astrocytes. In addition to brain, also expressed in the spinal cord (at protein level).

Its subcellular location is the lysosome membrane. The protein localises to the cell projection. The protein resides in the axon. The catalysed reaction is L-glutamine(in) + Na(+)(in) = L-glutamine(out) + Na(+)(out). It carries out the reaction L-asparagine(in) + Na(+)(in) = L-asparagine(out) + Na(+)(out). Functionally, symporter that selectively cotransports sodium ions and amino acids, such as L-glutamine and L-asparagine from the lysosome into the cytoplasm and may participates in mTORC1 activation. The transport activity requires an acidic lysosomal lumen. This Mus musculus (Mouse) protein is Sodium-coupled neutral amino acid transporter 7.